A 367-amino-acid polypeptide reads, in one-letter code: UDP-N-acetylglucosamine--N-acetylmuramyl-(pentapeptide) pyrophosphoryl-undecaprenol N-acetylglucosamine transferase (367 aa).

Residues 15–17, asparagine 127, arginine 163, serine 191, isoleucine 249, and glutamine 294 contribute to the UDP-N-acetyl-alpha-D-glucosamine site; that span reads TGG.

This sequence belongs to the glycosyltransferase 28 family. MurG subfamily.

It is found in the cell inner membrane. It catalyses the reaction di-trans,octa-cis-undecaprenyl diphospho-N-acetyl-alpha-D-muramoyl-L-alanyl-D-glutamyl-meso-2,6-diaminopimeloyl-D-alanyl-D-alanine + UDP-N-acetyl-alpha-D-glucosamine = di-trans,octa-cis-undecaprenyl diphospho-[N-acetyl-alpha-D-glucosaminyl-(1-&gt;4)]-N-acetyl-alpha-D-muramoyl-L-alanyl-D-glutamyl-meso-2,6-diaminopimeloyl-D-alanyl-D-alanine + UDP + H(+). It participates in cell wall biogenesis; peptidoglycan biosynthesis. Functionally, cell wall formation. Catalyzes the transfer of a GlcNAc subunit on undecaprenyl-pyrophosphoryl-MurNAc-pentapeptide (lipid intermediate I) to form undecaprenyl-pyrophosphoryl-MurNAc-(pentapeptide)GlcNAc (lipid intermediate II). The chain is UDP-N-acetylglucosamine--N-acetylmuramyl-(pentapeptide) pyrophosphoryl-undecaprenol N-acetylglucosamine transferase from Burkholderia cenocepacia (strain HI2424).